A 291-amino-acid chain; its full sequence is Homoserine kinase (291 aa).

80–90 (RPASGLGSSAA) serves as a coordination point for ATP.

Belongs to the GHMP kinase family. Homoserine kinase subfamily.

It is found in the cytoplasm. It catalyses the reaction L-homoserine + ATP = O-phospho-L-homoserine + ADP + H(+). It participates in amino-acid biosynthesis; L-threonine biosynthesis; L-threonine from L-aspartate: step 4/5. In terms of biological role, catalyzes the ATP-dependent phosphorylation of L-homoserine to L-homoserine phosphate. The chain is Homoserine kinase from Natronomonas pharaonis (strain ATCC 35678 / DSM 2160 / CIP 103997 / JCM 8858 / NBRC 14720 / NCIMB 2260 / Gabara) (Halobacterium pharaonis).